The following is a 319-amino-acid chain: Probable cytochrome c oxidase subunit 2 (319 aa).

An N-terminal signal peptide occupies residues 1–33 (MSPNGSDRSPRRPMRRKLLQALTAGLVLATATG). A run of 2 helical transmembrane segments spans residues 63–83 (WAAALATGVLVWGLILWATIF) and 101–121 (MPIEALYTVVPLIIVSVLFYF). Residues histidine 227, cysteine 262, cysteine 266, and histidine 270 each coordinate Cu cation.

The protein belongs to the cytochrome c oxidase subunit 2 family. The cofactor is Cu cation. It depends on heme as a cofactor.

The protein localises to the cell membrane. The enzyme catalyses 4 Fe(II)-[cytochrome c] + O2 + 8 H(+)(in) = 4 Fe(III)-[cytochrome c] + 2 H2O + 4 H(+)(out). Functionally, subunits I and II form the functional core of the enzyme complex. Electrons originating in cytochrome c are transferred via heme a and Cu(A) to the binuclear center formed by heme a3 and Cu(B). In Streptomyces avermitilis (strain ATCC 31267 / DSM 46492 / JCM 5070 / NBRC 14893 / NCIMB 12804 / NRRL 8165 / MA-4680), this protein is Probable cytochrome c oxidase subunit 2 (ctaC).